The chain runs to 213 residues: Probable inactive serine/threonine-protein kinase DDB_G0280559 (213 aa).

Residues 1 to 211 (MVLRYSYVFK…WNEIVNHSFF (211 aa)) form the Protein kinase domain.

This sequence belongs to the protein kinase superfamily. Ser/Thr protein kinase family.

The sequence is that of Probable inactive serine/threonine-protein kinase DDB_G0280559 from Dictyostelium discoideum (Social amoeba).